The sequence spans 492 residues: Bifunctional purine biosynthesis protein PurH (492 aa).

The region spanning 1–144 (MKKAILSVSN…KNYKHVTTIV (144 aa)) is the MGS-like domain.

Belongs to the PurH family.

It catalyses the reaction (6R)-10-formyltetrahydrofolate + 5-amino-1-(5-phospho-beta-D-ribosyl)imidazole-4-carboxamide = 5-formamido-1-(5-phospho-D-ribosyl)imidazole-4-carboxamide + (6S)-5,6,7,8-tetrahydrofolate. The enzyme catalyses IMP + H2O = 5-formamido-1-(5-phospho-D-ribosyl)imidazole-4-carboxamide. Its pathway is purine metabolism; IMP biosynthesis via de novo pathway; 5-formamido-1-(5-phospho-D-ribosyl)imidazole-4-carboxamide from 5-amino-1-(5-phospho-D-ribosyl)imidazole-4-carboxamide (10-formyl THF route): step 1/1. It participates in purine metabolism; IMP biosynthesis via de novo pathway; IMP from 5-formamido-1-(5-phospho-D-ribosyl)imidazole-4-carboxamide: step 1/1. The chain is Bifunctional purine biosynthesis protein PurH from Staphylococcus aureus (strain bovine RF122 / ET3-1).